A 439-amino-acid chain; its full sequence is Glutamate--tRNA ligase 2 (439 aa).

Positions 9-19 (PSPTGHLHVGN) match the 'HIGH' region motif. The 'KMSKS' region signature appears at 233–237 (KLSKR). An ATP-binding site is contributed by lysine 236.

Belongs to the class-I aminoacyl-tRNA synthetase family. Glutamate--tRNA ligase type 1 subfamily. In terms of assembly, monomer.

It is found in the cytoplasm. It carries out the reaction tRNA(Glu) + L-glutamate + ATP = L-glutamyl-tRNA(Glu) + AMP + diphosphate. Functionally, catalyzes the attachment of glutamate to tRNA(Glu) in a two-step reaction: glutamate is first activated by ATP to form Glu-AMP and then transferred to the acceptor end of tRNA(Glu). In Sphingopyxis alaskensis (strain DSM 13593 / LMG 18877 / RB2256) (Sphingomonas alaskensis), this protein is Glutamate--tRNA ligase 2.